The following is a 132-amino-acid chain: Large ribosomal subunit protein uL14 (132 aa).

Belongs to the universal ribosomal protein uL14 family. Part of the 50S ribosomal subunit. Forms a cluster with proteins L3 and L24e, part of which may contact the 16S rRNA in 2 intersubunit bridges.

Functionally, binds to 23S rRNA. Forms part of two intersubunit bridges in the 70S ribosome. The protein is Large ribosomal subunit protein uL14 of Methanosarcina barkeri (strain Fusaro / DSM 804).